A 27-amino-acid chain; its full sequence is Vasotocin-neurophysin VT (27 aa).

Cys-1 and Cys-6 are disulfide-bonded. A Glycine amide modification is found at Gly-9.

It belongs to the vasopressin/oxytocin family.

Its function is as follows. Vasotocin is an antidiuretic hormone. The chain is Vasotocin-neurophysin VT from Sclerophrys regularis (Common African toad).